Reading from the N-terminus, the 323-residue chain is Protein MEI2-like 6 (323 aa).

This is Protein MEI2-like 6 (ML6) from Oryza sativa subsp. japonica (Rice).